The primary structure comprises 434 residues: Probable tRNA pseudouridine synthase D (434 aa).

Catalysis depends on Asp-93, which acts as the Nucleophile. The TRUD domain occupies 169-396 (GTPNYFGQQR…SAGSRRAILL (228 aa)).

The protein belongs to the pseudouridine synthase TruD family.

It carries out the reaction uridine(13) in tRNA = pseudouridine(13) in tRNA. Could be responsible for synthesis of pseudouridine from uracil-13 in transfer RNAs. The polypeptide is Probable tRNA pseudouridine synthase D (Halobacterium salinarum (strain ATCC 29341 / DSM 671 / R1)).